Consider the following 625-residue polypeptide: DNA mismatch repair protein MutL (625 aa).

The protein belongs to the DNA mismatch repair MutL/HexB family.

Functionally, this protein is involved in the repair of mismatches in DNA. It is required for dam-dependent methyl-directed DNA mismatch repair. May act as a 'molecular matchmaker', a protein that promotes the formation of a stable complex between two or more DNA-binding proteins in an ATP-dependent manner without itself being part of a final effector complex. This Xanthomonas axonopodis pv. citri (strain 306) protein is DNA mismatch repair protein MutL.